A 158-amino-acid chain; its full sequence is uncharacterized protein (158 aa).

This is an uncharacterized protein from Archaeoglobus fulgidus (strain ATCC 49558 / DSM 4304 / JCM 9628 / NBRC 100126 / VC-16).